A 375-amino-acid chain; its full sequence is Succinyl-diaminopimelate desuccinylase (375 aa).

Histidine 66 serves as a coordination point for Zn(2+). Aspartate 68 is a catalytic residue. A Zn(2+)-binding site is contributed by aspartate 99. Glutamate 133 functions as the Proton acceptor in the catalytic mechanism. Zn(2+) contacts are provided by glutamate 134, glutamate 162, and histidine 348.

It belongs to the peptidase M20A family. DapE subfamily. In terms of assembly, homodimer. It depends on Zn(2+) as a cofactor. Co(2+) is required as a cofactor.

It catalyses the reaction N-succinyl-(2S,6S)-2,6-diaminopimelate + H2O = (2S,6S)-2,6-diaminopimelate + succinate. It functions in the pathway amino-acid biosynthesis; L-lysine biosynthesis via DAP pathway; LL-2,6-diaminopimelate from (S)-tetrahydrodipicolinate (succinylase route): step 3/3. Catalyzes the hydrolysis of N-succinyl-L,L-diaminopimelic acid (SDAP), forming succinate and LL-2,6-diaminopimelate (DAP), an intermediate involved in the bacterial biosynthesis of lysine and meso-diaminopimelic acid, an essential component of bacterial cell walls. The protein is Succinyl-diaminopimelate desuccinylase of Salmonella typhi.